The chain runs to 495 residues: MSKLQIIQSKGQYINGEWIKGNGLILESTNPASGTLLWQGNNATDEEITHACYIAHCALKSWANTSFEERARYTIAFVEQVEKNRDQLARLISLETGKPLWESQTEVSSVIGKVNLSIQAYQERTWPKQTETAEANACLRFKPHGVVVVLGAFNFPAHLSNGHIVPALLAGNTVLYKPSEHTPAVAELIIQCWHNSGLPPGVINCLQGNANCGNTLLSQDIQGVYFTGSYATGLRIHQQFCNRPEVILALEMGGNNPLVIDEVKDINAAVYHTMLSTMITAGQRCTCARRIIIPDSQTGDLFLERFAKACKLMRIGSFDSQPEPFIGPVINHVQALKHLHAQKQLIEIGGEIILPMSLLVEYTGLISPGIIDMTRAKNPPDEEIFAPFAQIYRYNHFDEAIQLANQTRYGLSAGLLSDNKDHYLQFYQHIRAGLINWNRPTTGAASSLPFGGVGCSGNHRPSAYFAADYCAYPVASMEQPLLTTPAQRLPGLVLE.

Residue 228-233 (GSYATG) coordinates NAD(+). Active-site residues include Glu-251 and Cys-285.

The protein belongs to the aldehyde dehydrogenase family. AstD subfamily.

It catalyses the reaction N-succinyl-L-glutamate 5-semialdehyde + NAD(+) + H2O = N-succinyl-L-glutamate + NADH + 2 H(+). It participates in amino-acid degradation; L-arginine degradation via AST pathway; L-glutamate and succinate from L-arginine: step 4/5. In terms of biological role, catalyzes the NAD-dependent reduction of succinylglutamate semialdehyde into succinylglutamate. This chain is N-succinylglutamate 5-semialdehyde dehydrogenase, found in Legionella pneumophila (strain Paris).